The following is a 287-amino-acid chain: D-apionate oxidoisomerase (287 aa).

NAD(+) contacts are provided by residues 13–15 (GKM), E36, and D71. Residues H116 and E186 each contribute to the Zn(2+) site.

It belongs to the ApnO family. It depends on Zn(2+) as a cofactor.

It carries out the reaction D-apionate + NAD(+) = 3-oxoisoapionate + NADH + H(+). The protein operates within carbohydrate metabolism. Its function is as follows. Involved in catabolism of D-apiose. Catalyzes the conversion of D-apionate to 3-oxo-isoapionate. The protein is D-apionate oxidoisomerase of Blautia hydrogenotrophica (strain DSM 10507 / JCM 14656 / S5a33) (Ruminococcus hydrogenotrophicus).